The primary structure comprises 486 residues: Inosine-5'-monophosphate dehydrogenase (486 aa).

2 consecutive CBS domains span residues 99-154 (IVED…LVKE) and 156-215 (MTKE…VRDE). Residues Asp247 and 294–296 (GIG) contribute to the NAD(+) site. 2 residues coordinate K(+): Gly296 and Gly298. Ser299 provides a ligand contact to IMP. A K(+)-binding site is contributed by Cys301. The active-site Thioimidate intermediate is the Cys301. Residues 334–336 (DGG), 357–358 (GN), and 381–385 (YRGMG) each bind IMP. Arg397 (proton acceptor) is an active-site residue. Position 412 (Glu412) interacts with IMP. 3 residues coordinate K(+): Glu466, Ser467, and His468.

The protein belongs to the IMPDH/GMPR family. As to quaternary structure, homotetramer. It depends on K(+) as a cofactor.

The catalysed reaction is IMP + NAD(+) + H2O = XMP + NADH + H(+). It participates in purine metabolism; XMP biosynthesis via de novo pathway; XMP from IMP: step 1/1. Mycophenolic acid (MPA) is a non-competitive inhibitor that prevents formation of the closed enzyme conformation by binding to the same site as the amobile flap. In contrast, mizoribine monophosphate (MZP) is a competitive inhibitor that induces the closed conformation. MPA is a potent inhibitor of mammalian IMPDHs but a poor inhibitor of the bacterial enzymes. MZP is a more potent inhibitor of bacterial IMPDH. Catalyzes the conversion of inosine 5'-phosphate (IMP) to xanthosine 5'-phosphate (XMP), the first committed and rate-limiting step in the de novo synthesis of guanine nucleotides, and therefore plays an important role in the regulation of cell growth. This Pyrococcus horikoshii (strain ATCC 700860 / DSM 12428 / JCM 9974 / NBRC 100139 / OT-3) protein is Inosine-5'-monophosphate dehydrogenase.